The chain runs to 524 residues: Anthranilate synthase component 1 (524 aa).

Positions 1–16 are enriched in polar residues; the sequence is MQTTANHSSRSTQTGT. The segment at 1-25 is disordered; it reads MQTTANHSSRSTQTGTRAHGAALAE. L-tryptophan-binding positions include S74 and 298–300; that span reads PYM. 339-340 serves as a coordination point for chorismate; that stretch reads GT. K355 participates in a covalent cross-link: Isoglutamyl lysine isopeptide (Lys-Gln) (interchain with Q-Cter in protein Pup). E366 contacts Mg(2+). Chorismate contacts are provided by residues Y454, R474, 488–490, and G490; that span reads GGG. E503 contacts Mg(2+).

The protein belongs to the anthranilate synthase component I family. As to quaternary structure, heterotetramer consisting of two non-identical subunits: a beta subunit (TrpG) and a large alpha subunit (TrpE). Mg(2+) serves as cofactor.

It carries out the reaction chorismate + L-glutamine = anthranilate + pyruvate + L-glutamate + H(+). It functions in the pathway amino-acid biosynthesis; L-tryptophan biosynthesis; L-tryptophan from chorismate: step 1/5. With respect to regulation, feedback inhibited by tryptophan. Functionally, part of a heterotetrameric complex that catalyzes the two-step biosynthesis of anthranilate, an intermediate in the biosynthesis of L-tryptophan. In the first step, the glutamine-binding beta subunit (TrpG) of anthranilate synthase (AS) provides the glutamine amidotransferase activity which generates ammonia as a substrate that, along with chorismate, is used in the second step, catalyzed by the large alpha subunit of AS (TrpE) to produce anthranilate. In the absence of TrpG, TrpE can synthesize anthranilate directly from chorismate and high concentrations of ammonia. The chain is Anthranilate synthase component 1 (trpE) from Mycolicibacterium smegmatis (strain ATCC 700084 / mc(2)155) (Mycobacterium smegmatis).